A 360-amino-acid chain; its full sequence is Dehydrogenase mokE (360 aa).

Residue 50-53 (SDTK) coordinates NADP(+). 134–141 (AGISTAGL) lines the substrate pocket. NADP(+) is bound by residues 173-176 (STAT), 196-199 (SPHN), Tyr214, 261-262 (LN), and Thr279. Position 281–285 (281–285 (GPTIF)) interacts with substrate. 350 to 351 (LS) serves as a coordination point for NADP(+).

This sequence belongs to the zinc-containing alcohol dehydrogenase family. Monomer.

The protein operates within polyketide biosynthesis; lovastatin biosynthesis. Dehydrogenase; part of the gene cluster that mediates the biosynthesis of monakolin K, also known as lovastatin, and which acts as a potent competitive inhibitor of HMG-CoA reductase. Monakolin K biosynthesis is performed in two stages. The first stage is catalyzed by the nonaketide synthase mokA, which belongs to type I polyketide synthases and catalyzes the iterative nine-step formation of the polyketide. This PKS stage is completed by the action of dehydrogenase mokE, which catalyzes the NADPH-dependent reduction of the unsaturated tetra-, penta- and heptaketide intermediates that arise during the mokA-mediated biosynthesis of the nonaketide chain and leads to dihydromonacolin L. Covalently bound dihydromonacolin L is released from mokA by the mokD esterase. Conversion of dihydromonacolin L into monacolin L and then monacolin J is subsequently performed with the participation of molecular oxygen and P450 monoogygenase mokC. Finally, mokF performs the conversion of monacoline J to monacoline K through the addition of the side-chain diketide moiety (2R)-2-methylbutanoate produced by the diketide synthase mokB. This chain is Dehydrogenase mokE, found in Monascus pilosus (Red mold).